The chain runs to 362 residues: Probable tocopherol O-methyltransferase, chloroplastic (362 aa).

Residues 1-55 (MAHAAAATGALAPLHPLLRCTSRHLCASASPRAGLCLHHHRRRRRSSRRTKLAVR) constitute a chloroplast transit peptide. An SAM motif I region spans residues 141–150 (VVDVGCGIGG). Positions 204–212 (GQFDLVWSM) are SAM motif II. An SAM motif III region spans residues 231–240 (VAAPGARIII).

The protein belongs to the class I-like SAM-binding methyltransferase superfamily. gTMT family.

The protein resides in the plastid. The protein localises to the chloroplast. The enzyme catalyses gamma-tocopherol + S-adenosyl-L-methionine = (+)-alpha-tocopherol + S-adenosyl-L-homocysteine + H(+). It carries out the reaction delta-tocotrienol + S-adenosyl-L-methionine = beta-tocotrienol + S-adenosyl-L-homocysteine + H(+). The catalysed reaction is gamma-tocotrienol + S-adenosyl-L-methionine = alpha-tocotrienol + S-adenosyl-L-homocysteine + H(+). It catalyses the reaction delta-tocopherol + S-adenosyl-L-methionine = beta-tocopherol + S-adenosyl-L-homocysteine + H(+). The protein operates within cofactor biosynthesis; tocopherol biosynthesis. In terms of biological role, involved in the synthesis of tocopherol (vitamin E). Methylates gamma- and delta-tocopherol to form beta- and alpha-tocopherol, respectively. This is Probable tocopherol O-methyltransferase, chloroplastic (VTE4) from Oryza sativa subsp. japonica (Rice).